The chain runs to 108 residues: Phosphoribosyl-ATP pyrophosphatase (108 aa).

Residues 88 to 108 (VENELDRREGRSGIEEKASRK) form a disordered region. Residues 91 to 108 (ELDRREGRSGIEEKASRK) show a composition bias toward basic and acidic residues.

This sequence belongs to the PRA-PH family.

It is found in the cytoplasm. It catalyses the reaction 1-(5-phospho-beta-D-ribosyl)-ATP + H2O = 1-(5-phospho-beta-D-ribosyl)-5'-AMP + diphosphate + H(+). It participates in amino-acid biosynthesis; L-histidine biosynthesis; L-histidine from 5-phospho-alpha-D-ribose 1-diphosphate: step 2/9. The sequence is that of Phosphoribosyl-ATP pyrophosphatase from Paracoccus denitrificans (strain Pd 1222).